A 127-amino-acid chain; its full sequence is MAYRKLGRDSAHRKAMLREMTTQLIMNERIVTTETRAKEVRKTAEKMITLGKRGNLASRRKAAAFVRNEVADVHEEKDAVVVKSALQKLFSDVAPRYKDRNGGYTRILKLAVPRKGDAAPMVILELV.

Belongs to the bacterial ribosomal protein bL17 family. As to quaternary structure, part of the 50S ribosomal subunit. Contacts protein L32.

The sequence is that of Large ribosomal subunit protein bL17 from Lactobacillus helveticus (strain DPC 4571).